The sequence spans 377 residues: Floricaula/leafy homolog (377 aa).

The span at 116–126 shows a compositional bias: basic and acidic residues; that stretch reads RRRLDEEDPRR. The segment at 116-190 is disordered; that stretch reads RRRLDEEDPR…RKKGQRKVVD (75 aa). Residues 131–141 are compositionally biased toward polar residues; the sequence is SGDNNTNTLDA. 3 DNA-binding regions span residues 206 to 210, 275 to 282, and 346 to 349; these read REHPF, NKPKMRHY, and YVPT.

The protein belongs to the FLO/LFY family. As to expression, in developing inflorescences, leaf primordia and very young leaves.

The protein localises to the nucleus. Its function is as follows. Probable transcription factor. This Populus trichocarpa (Western balsam poplar) protein is Floricaula/leafy homolog (FL).